Consider the following 127-residue polypeptide: Probable glycine cleavage system H protein (127 aa).

Residues 24–106 (TAEVGITAFA…FGDGWMLTVE (83 aa)) form the Lipoyl-binding domain. Lys65 carries the post-translational modification N6-lipoyllysine.

The protein belongs to the GcvH family. The glycine cleavage system is composed of four proteins: P, T, L and H. It depends on (R)-lipoate as a cofactor.

Functionally, the glycine cleavage system catalyzes the degradation of glycine. The H protein shuttles the methylamine group of glycine from the P protein to the T protein. The chain is Probable glycine cleavage system H protein from Haloarcula marismortui (strain ATCC 43049 / DSM 3752 / JCM 8966 / VKM B-1809) (Halobacterium marismortui).